The following is a 147-amino-acid chain: Small ribosomal subunit protein eS10B (147 aa).

The interval 90 to 147 is disordered; sequence THKRQVRPAAPRAGRPEPRERSSAADAGYRRAEKKDDGAAPGGFAPSFRGGFGRPVAA. Residues 103–127 are compositionally biased toward basic and acidic residues; the sequence is GRPEPRERSSAADAGYRRAEKKDDG.

It belongs to the eukaryotic ribosomal protein eS10 family. In terms of assembly, component of the small ribosomal subunit (SSU). Mature yeast ribosomes consist of a small (40S) and a large (60S) subunit. The 40S small subunit contains 1 molecule of ribosomal RNA (18S rRNA) and at least 33 different proteins. The large 60S subunit contains 3 rRNA molecules (25S, 5.8S and 5S rRNA) and at least 46 different proteins. eS10 interacts with GCN1 (via middle region); this interaction is direct and promotes GCN2 kinase activity.

It localises to the cytoplasm. In terms of biological role, component of the ribosome, a large ribonucleoprotein complex responsible for the synthesis of proteins in the cell. The small ribosomal subunit (SSU) binds messenger RNAs (mRNAs) and translates the encoded message by selecting cognate aminoacyl-transfer RNA (tRNA) molecules. The large subunit (LSU) contains the ribosomal catalytic site termed the peptidyl transferase center (PTC), which catalyzes the formation of peptide bonds, thereby polymerizing the amino acids delivered by tRNAs into a polypeptide chain. The nascent polypeptides leave the ribosome through a tunnel in the LSU and interact with protein factors that function in enzymatic processing, targeting, and the membrane insertion of nascent chains at the exit of the ribosomal tunnel. eS10 plays a role as a positive regulator of the GCN2 kinase activity by stimulating GCN1-mediated GCN2 activation. The protein is Small ribosomal subunit protein eS10B (rps1002) of Schizosaccharomyces pombe (strain 972 / ATCC 24843) (Fission yeast).